The primary structure comprises 2170 residues: Supervillin (2170 aa).

The segment at 1-167 (MKRKERIARR…NSRHSRTESG (167 aa)) is interaction with MYLK. Disordered stretches follow at residues 37–94 (EDTP…HSLE), 107–327 (RRRQ…QSES), 413–444 (PEPLERSPKSLLTSEDDRLVRGHKDPSGNKDL), 511–546 (DYTGPPQLQVPRHKDEAPSQELELQSSRAEGPGAEA), and 567–643 (RASK…EDEE). S50 carries the phosphoserine modification. 2 stretches are compositionally biased toward polar residues: residues 63–73 (PGSSLEKQTPS) and 81–90 (GIHSSGSMDT). Residues 134–166 (SRKDPDVTERRGKSDKQEEQSKDANSRHSRTES) are compositionally biased toward basic and acidic residues. The span at 167–195 (GPRTSLVASQDCTPLGSNMSDQEQLLNVE) shows a compositional bias: polar residues. Phosphoserine occurs at positions 220, 227, and 241. A compositionally biased stretch (polar residues) spans 230–241 (QIPSSPLQQPAS). Composition is skewed to basic and acidic residues over residues 261 to 272 (PTHEWFLQRDSE) and 286 to 297 (KVREKLVKEESA). Positions 298 to 313 (RSSPELTSESLTQRRQ) are enriched in polar residues. Phosphoserine is present on residues S299 and S300. Over residues 427 to 444 (EDDRLVRGHKDPSGNKDL) the composition is skewed to basic and acidic residues. 2 stretches are compositionally biased toward basic and acidic residues: residues 570–582 (KKPELQSRVERSA) and 606–615 (ESRKTSERFR). Phosphoserine occurs at positions 632, 666, 728, and 761. The segment at 743 to 771 (ASAHQKALARDQANEGRESAEPGEPDSST) is disordered. Positions 750–762 (LARDQANEGRESA) are enriched in basic and acidic residues. Residue Y809 is modified to Phosphotyrosine. The residue at position 811 (T811) is a Phosphothreonine. S857, S877, and S881 each carry phosphoserine. A disordered region spans residues 887–909 (AWRPLVEHSGSKGMPGESGKTES). Residues S960, S1011, S1031, and S1077 each carry the phosphoserine modification. Positions 1117 to 1137 (HTQEVEQSLKKKRVTESRESQ) are disordered. A compositionally biased stretch (basic and acidic residues) spans 1119-1137 (QEVEQSLKKKRVTESRESQ). R1159 is subject to Omega-N-methylarginine. Phosphoserine is present on residues S1181 and S1184. The residue at position 1186 (T1186) is a Phosphothreonine. A phosphoserine mark is found at S1190, S1278, and S1361. The segment at 1375-1643 (SNINLRSVNL…KFLDWTELKR (269 aa)) is interaction with NEB. 5 Gelsolin-like repeats span residues 1397–1496 (KKLM…LGGQ), 1516–1638 (IETN…FLDW), 1708–1818 (VSVD…FQGG), 1837–1938 (WRLY…LGRR), and 1971–2078 (ATEF…FPSW). The HP domain occupies 2107–2170 (KLCKTIYPLA…VNLKKSKGLF (64 aa)).

Belongs to the villin/gelsolin family. In terms of assembly, associates with F-actin. Interacts with NEB. Interacts with MYH9. Interacts with MYLK. Interacts with TASOR. As to quaternary structure, interacts with TRIP6. Interacts with DYNLT1. Interacts with KIF14; at midbody during cytokinesis. Expressed in the heart, tongue and granular cells within the cerebellum.

It is found in the cell membrane. It localises to the cytoplasm. Its subcellular location is the cytoskeleton. The protein resides in the cell projection. The protein localises to the invadopodium. It is found in the podosome. It localises to the midbody. Its subcellular location is the cleavage furrow. Forms a high-affinity link between the actin cytoskeleton and the membrane. Is among the first costameric proteins to assemble during myogenesis and it contributes to myogenic membrane structure and differentiation. Appears to be involved in myosin II assembly. May modulate myosin II regulation through MLCK during cell spreading, an initial step in cell migration. May play a role in invadopodial function. Its function is as follows. May be involved in modulation of focal adhesions. Supervillin-mediated down-regulation of focal adhesions involves binding to TRIP6. Plays a role in cytokinesis through KIF14 interaction. This chain is Supervillin (Svil), found in Mus musculus (Mouse).